The following is a 368-amino-acid chain: uncharacterized protein (368 aa).

Belongs to the CdaR family.

This is an uncharacterized protein from Haemophilus influenzae (strain ATCC 51907 / DSM 11121 / KW20 / Rd).